The sequence spans 155 residues: E3 ubiquitin-protein ligase RHA2A (155 aa).

The segment at 86-128 adopts an RING-type; atypical zinc-finger fold; it reads CVVCLSKLKEGEEVRKLECRHVFHKKCLEGWLHQFNFTCPLCR.

In terms of assembly, interacts with NAC019 and NAC055. As to expression, expressed in stems, flowers, cauline leaves, rosettes, siliques, seeds and roots.

The protein localises to the cytoplasm. It localises to the nucleus. The enzyme catalyses S-ubiquitinyl-[E2 ubiquitin-conjugating enzyme]-L-cysteine + [acceptor protein]-L-lysine = [E2 ubiquitin-conjugating enzyme]-L-cysteine + N(6)-ubiquitinyl-[acceptor protein]-L-lysine.. It participates in protein modification; protein ubiquitination. Functionally, E3 ubiquitin-protein ligase involved in the positive regulation of abscisic acid (ABA) signaling and responses to salt and osmotic stresses during seed germination and early seedling development. Acts additively with RHA2B in regulating ABA signaling and drought response. Possesses E3 ubiquitin ligase activity in vitro. The protein is E3 ubiquitin-protein ligase RHA2A of Arabidopsis thaliana (Mouse-ear cress).